The sequence spans 331 residues: Ribosomal RNA small subunit methyltransferase H (331 aa).

Residues 38–40 (GGY), D56, F83, D100, and Q107 each bind S-adenosyl-L-methionine. Residues 289-331 (AELAENPRARSARLRVGVRTDAPAGKVDPQALGTPLIPKKGRR) are disordered.

This sequence belongs to the methyltransferase superfamily. RsmH family.

It is found in the cytoplasm. The catalysed reaction is cytidine(1402) in 16S rRNA + S-adenosyl-L-methionine = N(4)-methylcytidine(1402) in 16S rRNA + S-adenosyl-L-homocysteine + H(+). In terms of biological role, specifically methylates the N4 position of cytidine in position 1402 (C1402) of 16S rRNA. This chain is Ribosomal RNA small subunit methyltransferase H, found in Cereibacter sphaeroides (strain ATCC 17029 / ATH 2.4.9) (Rhodobacter sphaeroides).